Here is an 858-residue protein sequence, read N- to C-terminus: Protein VACUOLELESS1 (858 aa).

The protein belongs to the VPS16 family. Core component of at least two putative endosomal tethering complexes, the homotypic fusion and vacuole protein sorting (HOPS) complex and the class C core vacuole/endosome tethering (CORVET) complex. Their common core is composed of the class C Vps proteins VPS11, VCL1, VPS18 and VPS33, which in HOPS further associates with VPS39 and VPS41 and in CORVET with VPS3. As to expression, expressed in roots, leaves, stems, siliques, flowers and mature pollen.

It localises to the vacuole membrane. Its subcellular location is the prevacuolar compartment membrane. Its function is as follows. Required for vacuole biogenesis and vacuole enlargment in dividing and expanding cells. Involved in the docking or fusion of prevacuolar vesicles. Important for the function of both male and female gametophytes, but is not essential for the germination and development of pollen. This Arabidopsis thaliana (Mouse-ear cress) protein is Protein VACUOLELESS1 (VCL1).